The primary structure comprises 369 residues: Methionine import ATP-binding protein MetN 1 (369 aa).

The region spanning 29–265 (IRLHGLGKRY…PRHAVTRSLL (237 aa)) is the ABC transporter domain. An ATP-binding site is contributed by 62–69 (GRSGAGKS).

Belongs to the ABC transporter superfamily. Methionine importer (TC 3.A.1.24) family. In terms of assembly, the complex is composed of two ATP-binding proteins (MetN), two transmembrane proteins (MetI) and a solute-binding protein (MetQ).

The protein resides in the cell inner membrane. It carries out the reaction L-methionine(out) + ATP + H2O = L-methionine(in) + ADP + phosphate + H(+). It catalyses the reaction D-methionine(out) + ATP + H2O = D-methionine(in) + ADP + phosphate + H(+). In terms of biological role, part of the ABC transporter complex MetNIQ involved in methionine import. Responsible for energy coupling to the transport system. The chain is Methionine import ATP-binding protein MetN 1 from Pseudomonas aeruginosa (strain ATCC 15692 / DSM 22644 / CIP 104116 / JCM 14847 / LMG 12228 / 1C / PRS 101 / PAO1).